We begin with the raw amino-acid sequence, 288 residues long: Homeobox protein Hox-B4a (288 aa).

The tract at residues 10–136 (SNYVDPKFPP…ASSPASTRKD (127 aa)) is disordered. Polar residues predominate over residues 118–132 (CGQTPHSQGASSPAS). The short motif at 139 to 144 (VYPWMK) is the Antp-type hexapeptide element. A DNA-binding region (homeobox) is located at residues 160–219 (PKRSRTAYTRQQVLELEKEFHYNRYLTRRRRVEIAHTLCLSERQIKIWFQNRRMKWKKDH).

This sequence belongs to the Antp homeobox family. Deformed subfamily.

It localises to the nucleus. Its function is as follows. Sequence-specific transcription factor which is part of a developmental regulatory system that provides cells with specific positional identities on the anterior-posterior axis. This chain is Homeobox protein Hox-B4a (hoxb4a), found in Takifugu rubripes (Japanese pufferfish).